A 290-amino-acid chain; its full sequence is Phosphoribulokinase 1 (290 aa).

Residue 12-20 (GSSGAGTST) participates in ATP binding.

It belongs to the phosphoribulokinase family. Homooctamer.

The enzyme catalyses D-ribulose 5-phosphate + ATP = D-ribulose 1,5-bisphosphate + ADP + H(+). The protein operates within carbohydrate biosynthesis; Calvin cycle. Activated by NADH and inhibited by phosphoenolpyruvate. The chain is Phosphoribulokinase 1 (prkA) from Cereibacter sphaeroides (Rhodobacter sphaeroides).